Here is a 562-residue protein sequence, read N- to C-terminus: Arginine--tRNA ligase (562 aa).

The short motif at 129 to 139 (ANPTGPLHVGH) is the 'HIGH' region element.

It belongs to the class-I aminoacyl-tRNA synthetase family. Monomer.

It is found in the cytoplasm. The enzyme catalyses tRNA(Arg) + L-arginine + ATP = L-arginyl-tRNA(Arg) + AMP + diphosphate. This chain is Arginine--tRNA ligase, found in Xanthomonas campestris pv. campestris (strain B100).